Consider the following 290-residue polypeptide: Zinc finger protein-like 1 homolog (290 aa).

The B box-type; degenerate zinc-finger motif lies at 1 to 43 (MGLCKCPKRQVTTQFCFEHRVNVCENCMVVNHTKCTVQSYIQW). The segment at 53-101 (CPLCGSPLDNEDCVRLICYHVFHWKCLNAKQQSLPANTAPGGHTCPTCS) adopts an RING-type; atypical zinc-finger fold. Polar residues predominate over residues 156-168 (NGNTFASSMSQTR). Positions 156 to 175 (NGNTFASSMSQTRSNERPES) are disordered. The chain crosses the membrane as a helical span at residues 249-269 (WFLVLGGCIGFVCIIYVLATL).

It belongs to the ZFPL1 family.

It localises to the membrane. The polypeptide is Zinc finger protein-like 1 homolog (Aedes aegypti (Yellowfever mosquito)).